Here is a 396-residue protein sequence, read N- to C-terminus: RNA binding protein fox-1 homolog 1 (396 aa).

The disordered stretch occupies residues 1–119; that stretch reads MNCEREQLRG…ESKSQPKRLH (119 aa). Positions 67–86 are enriched in polar residues; it reads PPTQTHSEQSADTSAQTVSG. Over residues 87-98 the composition is skewed to low complexity; the sequence is TATQTDDAAPTD. Over residues 99–112 the composition is skewed to polar residues; the sequence is GQPQTQPSENTESK. Residues 116-192 enclose the RRM domain; it reads KRLHVSNIPF…RKIEVNNATA (77 aa). Residues arginine 316 and alanine 337 each carry the asymmetric dimethylarginine modification. Arginine 387 is modified (omega-N-methylarginine).

In terms of assembly, binds to the C-terminus of ATXN2. As to expression, detected in brain (at protein level). Detected in heart, brain, neurons, skeletal muscle and embryo.

Its subcellular location is the nucleus. It localises to the cytoplasm. Functionally, RNA-binding protein that regulates alternative splicing events by binding to 5'-UGCAUGU-3' elements. Prevents binding of U2AF2 to the 3'-splice site. Regulates alternative splicing of tissue-specific exons and of differentially spliced exons during erythropoiesis. The chain is RNA binding protein fox-1 homolog 1 (Rbfox1) from Mus musculus (Mouse).